Consider the following 213-residue polypeptide: MYQDKILVRQLGLQPYEPISLAMHEFTDTRDESTLDEIWLVEHYPVFTQGQAGKAEHILMPGDIPVIQSDRGGQVTYHGPGQQVMYVLLNLKRRKLGVRELVTLLEQTVVNTLAELGIEAHPRADAPGVYVGEKKICSLGLRIRRGCSFHGLALNVNMDLSPFLRINPCGYAGMEMAKISQWKPEATTNNIAPRLLENILALLNNPDFEYITA.

Residues 32–207 (ESTLDEIWLV…NILALLNNPD (176 aa)) enclose the BPL/LPL catalytic domain. Substrate contacts are provided by residues 71-78 (RGGQVTYH), 138-140 (SLG), and 151-153 (GLA). Cysteine 169 functions as the Acyl-thioester intermediate in the catalytic mechanism.

Belongs to the LipB family.

It is found in the cytoplasm. The enzyme catalyses octanoyl-[ACP] + L-lysyl-[protein] = N(6)-octanoyl-L-lysyl-[protein] + holo-[ACP] + H(+). It functions in the pathway protein modification; protein lipoylation via endogenous pathway; protein N(6)-(lipoyl)lysine from octanoyl-[acyl-carrier-protein]: step 1/2. Its function is as follows. Catalyzes the transfer of endogenously produced octanoic acid from octanoyl-acyl-carrier-protein onto the lipoyl domains of lipoate-dependent enzymes. Lipoyl-ACP can also act as a substrate although octanoyl-ACP is likely to be the physiological substrate. This Escherichia coli (strain SMS-3-5 / SECEC) protein is Octanoyltransferase.